A 160-amino-acid polypeptide reads, in one-letter code: MDQAKLARMQASVRIGGKGTPRRKVKKVHKSSGTDDKKLQTALKKLNVQPIQAIEEVNMFKSDGNVIHFSAPKVHASVPSNTFAIYGNGEDKELTELVPGILNQLGPDSLASLRKLAESYQSMQKEKGEDGDKKDDDDEDDDDIPELVAGDNFESKTEVE.

Disordered regions lie at residues 16 to 36 and 118 to 160; these read GGKGTPRRKVKKVHKSSGTDD and ESYQ…TEVE. The span at 20-30 shows a compositional bias: basic residues; sequence TPRRKVKKVHK. Residues 33-98 form the NAC-A/B domain; the sequence is GTDDKKLQTA…GEDKELTELV (66 aa). Over residues 124–134 the composition is skewed to basic and acidic residues; sequence QKEKGEDGDKK. Over residues 135 to 145 the composition is skewed to acidic residues; that stretch reads DDDDEDDDDIP.

The protein belongs to the NAC-beta family. In terms of assembly, part of the nascent polypeptide-associated complex (NAC), consisting of EGD2 and EGD1. NAC associates with ribosomes via EGD1.

Its subcellular location is the cytoplasm. It localises to the nucleus. Functionally, component of the nascent polypeptide-associated complex (NAC), a dynamic component of the ribosomal exit tunnel, protecting the emerging polypeptides from interaction with other cytoplasmic proteins to ensure appropriate nascent protein targeting. The NAC complex also promotes mitochondrial protein import by enhancing productive ribosome interactions with the outer mitochondrial membrane and blocks the inappropriate interaction of ribosomes translating non-secretory nascent polypeptides with translocation sites in the membrane of the endoplasmic reticulum. EGD1 may act as a transcription factor that exert a negative effect on the expression of several genes that are transcribed by RNA polymerase II. The polypeptide is Nascent polypeptide-associated complex subunit beta (EGD1) (Phaeosphaeria nodorum (strain SN15 / ATCC MYA-4574 / FGSC 10173) (Glume blotch fungus)).